A 152-amino-acid polypeptide reads, in one-letter code: Protein IpgF (152 aa).

The signal sequence occupies residues 1–17; the sequence is MSRFVFILLCFIPYLGR.

This sequence belongs to the IagB/IpgF/P19 family.

The protein is Protein IpgF (ipgF) of Shigella sonnei.